Reading from the N-terminus, the 212-residue chain is Peptide methionine sulfoxide reductase MsrA (212 aa).

C52 is an active-site residue.

It belongs to the MsrA Met sulfoxide reductase family.

The enzyme catalyses L-methionyl-[protein] + [thioredoxin]-disulfide + H2O = L-methionyl-(S)-S-oxide-[protein] + [thioredoxin]-dithiol. It catalyses the reaction [thioredoxin]-disulfide + L-methionine + H2O = L-methionine (S)-S-oxide + [thioredoxin]-dithiol. Its function is as follows. Has an important function as a repair enzyme for proteins that have been inactivated by oxidation. Catalyzes the reversible oxidation-reduction of methionine sulfoxide in proteins to methionine. The polypeptide is Peptide methionine sulfoxide reductase MsrA (Salmonella schwarzengrund (strain CVM19633)).